Reading from the N-terminus, the 311-residue chain is Nucleotide-binding protein Acel_1111 (311 aa).

30–37 provides a ligand contact to ATP; the sequence is GLSGAGRS. 81–84 contacts GTP; the sequence is DVRS.

The protein belongs to the RapZ-like family.

Its function is as follows. Displays ATPase and GTPase activities. This is Nucleotide-binding protein Acel_1111 from Acidothermus cellulolyticus (strain ATCC 43068 / DSM 8971 / 11B).